We begin with the raw amino-acid sequence, 336 residues long: Atypical chemokine receptor 1 (336 aa).

Residues 1–30 (MGNCLHRAELSPSTENSSQLDFEDVWNSSY) form a mediates Plasmodium vivax Duffy receptor (PVDR) binding region. Residues 1–63 (MGNCLHRAEL…CNLLDDSALP (63 aa)) lie on the Extracellular side of the membrane. Residue N16 is glycosylated (N-linked (GlcNAc...) asparagine). Y30 carries the sulfotyrosine modification. N33 is a glycosylation site (N-linked (GlcNAc...) asparagine). Y41 is subject to Sulfotyrosine. 2 disulfide bridges follow: C51–C276 and C129–C195. Residues 64–84 (FFILTSVLGILASSTVLFMLF) traverse the membrane as a helical segment. Residues 85–95 (RPLFRWQLCPG) are Cytoplasmic-facing. Residues 96 to 116 (WPVLAQLAVGSALFSIVVPVL) traverse the membrane as a helical segment. The Extracellular segment spans residues 117–129 (APGLGSTRSSALC). Residues 130–153 (SLGYCVWYGSAFAQALLLGCHASL) traverse the membrane as a helical segment. At 154-166 (GHRLGAGQVPGLT) the chain is on the cytoplasmic side. Residues 167 to 187 (LGLTVGIWGVAALLTLPVTLA) traverse the membrane as a helical segment. Residues 188 to 207 (SGASGGLCTLIYSTELKALQ) are Extracellular-facing. A helical transmembrane segment spans residues 208–228 (ATHTVACLAIFVLLPLGLFGA). Residues 229-244 (KGLKKALGMGPGPWMN) are Cytoplasmic-facing. The helical transmembrane segment at 245–265 (ILWAWFIFWWPHGVVLGLDFL) threads the bilayer. Topologically, residues 266–287 (VRSKLLLLSTCLAQQALDLLLN) are extracellular. The helical transmembrane segment at 288–308 (LAEALAILHCVATPLLLALFC) threads the bilayer. Topologically, residues 309-336 (HQATRTLLPSLPLPEGWSSHLDTLGSKS) are cytoplasmic.

This sequence belongs to the G-protein coupled receptor 1 family. Atypical chemokine receptor subfamily. (Microbial infection) Interacts (via N-terminal extracellular domain) with Plasmodium vivax Duffy receptor (PVDR) (via PvRII region). In terms of assembly, (Microbial infection) Interacts (via N-terminal extracellular domain) with Plasmodium knowlesi Duffy receptor alpha form (DBPalpha) (via region II). In terms of processing, sulfation at Tyr-41 facilitates interaction with MGSA/CXCL1, RANTES/CCL5 and MCP-1/CCL2 but not IL8/CXCL8. Sulfation at Tyr-30 facilitates interaction with IL8/CXCL8. Post-translationally, (Microbial infection) Sulfation at Tyr-41 facilitates interaction with Plasmodium vivax Duffy receptor (PVDR). Sulfation at Tyr-30/Tyr-41 and Tyr-41 alone increases binding affinity of Plasmodium vivax parasites and likely promotes invasion of red blood cells. (Microbial infection) Sulfation at Tyr-41 facilitates interaction with Plasmodium knowlesi Duffy receptor alpha form (DBPalpha). Sulfation at Tyr-30/Tyr-41 and Tyr-41 alone increases binding affinity of Plasmodium knowlesi parasites and likely promotes invasion of red blood cells. As to expression, found in adult kidney, adult spleen, bone marrow and fetal liver. In particular, it is expressed along postcapillary venules throughout the body, except in the adult liver. Erythroid cells and postcapillary venule endothelium are the principle tissues expressing duffy. Fy(-A-B) individuals do not express duffy in the bone marrow, however they do, in postcapillary venule endothelium.

The protein localises to the early endosome. Its subcellular location is the recycling endosome. The protein resides in the membrane. In terms of biological role, atypical chemokine receptor that controls chemokine levels and localization via high-affinity chemokine binding that is uncoupled from classic ligand-driven signal transduction cascades, resulting instead in chemokine sequestration, degradation, or transcytosis. Also known as interceptor (internalizing receptor) or chemokine-scavenging receptor or chemokine decoy receptor. Has a promiscuous chemokine-binding profile, interacting with inflammatory chemokines of both the CXC and the CC subfamilies but not with homeostatic chemokines. Acts as a receptor for chemokines including CCL2, CCL5, CCL7, CCL11, CCL13, CCL14, CCL17, CXCL5, CXCL6, IL8/CXCL8, CXCL11, GRO, RANTES, MCP-1 and TARC. May regulate chemokine bioavailability and, consequently, leukocyte recruitment through two distinct mechanisms: when expressed in endothelial cells, it sustains the abluminal to luminal transcytosis of tissue-derived chemokines and their subsequent presentation to circulating leukocytes; when expressed in erythrocytes, serves as blood reservoir of cognate chemokines but also as a chemokine sink, buffering potential surges in plasma chemokine levels. Functionally, (Microbial infection) Acts as a receptor for the malaria parasite Plasmodium vivax. (Microbial infection) Acts as a receptor for the malaria parasite Plasmodium knowlesi. This chain is Atypical chemokine receptor 1 (ACKR1), found in Homo sapiens (Human).